The sequence spans 204 residues: Imidazoleglycerol-phosphate dehydratase (204 aa).

It belongs to the imidazoleglycerol-phosphate dehydratase family.

Its subcellular location is the cytoplasm. The enzyme catalyses D-erythro-1-(imidazol-4-yl)glycerol 3-phosphate = 3-(imidazol-4-yl)-2-oxopropyl phosphate + H2O. The protein operates within amino-acid biosynthesis; L-histidine biosynthesis; L-histidine from 5-phospho-alpha-D-ribose 1-diphosphate: step 6/9. The protein is Imidazoleglycerol-phosphate dehydratase of Corynebacterium jeikeium (strain K411).